Consider the following 82-residue polypeptide: Immediate early response 3-interacting protein 1 (82 aa).

2 consecutive transmembrane segments (helical) span residues 2-22 (AFTL…IAVL) and 62-82 (VMRV…LLFG).

Belongs to the YOS1 family.

The protein localises to the endoplasmic reticulum membrane. Regulator of endoplasmic reticulum secretion that acts as a key determinant of brain size. Required for secretion of extracellular matrix proteins. Required for correct brain development by depositing sufficient extracellular matrix proteins for tissue integrity and the proliferation of neural progenitors. Acts as a regulator of the unfolded protein response (UPR). This chain is Immediate early response 3-interacting protein 1, found in Rattus norvegicus (Rat).